A 293-amino-acid polypeptide reads, in one-letter code: uncharacterized protein (293 aa).

Disordered regions lie at residues 1 to 114 (MFLR…IPKL) and 268 to 293 (EETA…GRML). Phosphoserine is present on residues Ser-34, Ser-35, and Ser-89. Basic and acidic residues-rich tracts occupy residues 73–95 (SSRD…RDKT) and 277–293 (GQER…GRML).

This is an uncharacterized protein from Mus musculus (Mouse).